We begin with the raw amino-acid sequence, 3387 residues long: Genome polyprotein (3387 aa).

At M1–S100 the chain is on the cytoplasmic side. The segment at L36–L71 is hydrophobic; homodimerization of capsid protein C. The propeptide at S100 to A113 is ER anchor for the capsid protein C, removed in mature form by serine protease NS3. The chain crosses the membrane as a helical span at residues T101–S117. The Extracellular portion of the chain corresponds to T118–E237. N182 is a glycosylation site (N-linked (GlcNAc...) asparagine; by host). The chain crosses the membrane as a helical span at residues S238–G258. The Cytoplasmic portion of the chain corresponds to Q259–T265. Residues V266 to G279 form a helical membrane-spanning segment. Topologically, residues M280–T725 are extracellular. Intrachain disulfides connect C282-C309, C339-C400, C353-C384, and C371-C395. An N-linked (GlcNAc...) asparagine; by host glycan is attached at N346. The segment at D377–G390 is fusion peptide. N-linked (GlcNAc...) asparagine; by host glycosylation occurs at N432. 2 disulfide bridges follow: C464–C564 and C581–C612. Residues M726–G746 traverse the membrane as a helical segment. Residues T747–N751 are Cytoplasmic-facing. Residues T752–V772 form a helical membrane-spanning segment. Over Q773 to I1194 the chain is Extracellular. 6 cysteine pairs are disulfide-bonded: C778/C789, C829/C917, C953/C997, C1054/C1103, C1065/C1087, and C1086/C1090. N-linked (GlcNAc...) asparagine; by host glycans are attached at residues N904 and N981. Residues G1195–L1218 traverse the membrane as a helical segment. Over R1219–R1224 the chain is Lumenal. Residues E1225–H1243 form a helical membrane-spanning segment. At D1244–N1267 the chain is on the cytoplasmic side. Residues T1268 to M1288 form a helical membrane-spanning segment. Position 1289 (A1289) is a topological domain, lumenal. The helical transmembrane segment at W1290–T1308 threads the bilayer. The Lumenal portion of the chain corresponds to S1309–H1316. A helical membrane pass occupies residues W1317–L1337. The Cytoplasmic segment spans residues M1338–S1345. The helical transmembrane segment at W1346–L1366 threads the bilayer. Topologically, residues K1367–D1369 are lumenal. The helical transmembrane segment at V1370–G1390 threads the bilayer. Residues S1391 to N1437 lie on the Cytoplasmic side of the membrane. An interacts with and activates NS3 protease region spans residues L1397–T1436. An intramembrane region (helical) is located at residues M1438–I1458. Over P1459–S2143 the chain is Cytoplasmic. The Peptidase S7 domain occupies S1475 to V1652. Residues H1525, D1549, and S1609 each act as charge relay system; for serine protease NS3 activity in the active site. A Helicase ATP-binding domain is found at E1654–E1810. The tract at residues R1658–R1661 is important for RNA-binding. L1667–T1674 serves as a coordination point for ATP. Positions D1758–H1761 match the DEAH box motif. Positions T1820–R1987 constitute a Helicase C-terminal domain. K1862 bears the N6-acetyllysine; by host mark. A helical transmembrane segment spans residues L2144–F2164. Topologically, residues M2165 to G2169 are lumenal. An intramembrane region (helical) is located at residues I2170–A2190. Residue E2191 is a topological domain, lumenal. A helical membrane pass occupies residues I2192–I2212. Over P2213–Q2225 the chain is Cytoplasmic. The chain crosses the membrane as a helical span at residues L2226–G2246. The Lumenal segment spans residues L2247 to D2270. The helical intramembrane region spans L2271–L2291. Residues R2292–N2301 lie on the Lumenal side of the membrane. N2297 and N2301 each carry an N-linked (GlcNAc...) asparagine; by host glycan. The helical intramembrane region spans L2302–P2322. At L2323–P2343 the chain is on the lumenal side. A helical membrane pass occupies residues T2344–L2364. Residues Q2365 to Q2409 are Cytoplasmic-facing. The chain crosses the membrane as a helical span at residues V2410–C2430. The Lumenal portion of the chain corresponds to E2431 to T2455. N2453 carries N-linked (GlcNAc...) asparagine; by host glycosylation. A helical membrane pass occupies residues I2456–F2476. The Cytoplasmic segment spans residues S2477–L3387. Positions T2489–S2751 constitute an mRNA cap 0-1 NS5-type MT domain. S2543 is a binding site for S-adenosyl-L-methionine. S2543 bears the Phosphoserine mark. Residue K2548 is the For 2'-O-MTase activity of the active site. The short motif at V2564–L2567 is the SUMO-interacting motif element. G2573, W2574, T2591, K2592, D2618, and V2619 together coordinate S-adenosyl-L-methionine. D2633 functions as the For 2'-O-MTase activity in the catalytic mechanism. I2634 is an S-adenosyl-L-methionine binding site. Active-site for 2'-O-MTase activity residues include K2668 and E2704. Y2706 contributes to the S-adenosyl-L-methionine binding site. Residues E2925, H2929, C2934, and C2937 each coordinate Zn(2+). In terms of domain architecture, RdRp catalytic spans L3016 to L3166. H3200, C3216, and C3335 together coordinate Zn(2+).

In the N-terminal section; belongs to the class I-like SAM-binding methyltransferase superfamily. mRNA cap 0-1 NS5-type methyltransferase family. Homodimer. Interacts (via N-terminus) with host EXOC1 (via C-terminus); this interaction results in EXOC1 degradation through the proteasome degradation pathway. As to quaternary structure, forms heterodimers with envelope protein E in the endoplasmic reticulum and Golgi. In terms of assembly, homodimer; in the endoplasmic reticulum and Golgi. Interacts with protein prM. Interacts with non-structural protein 1. Homodimer; Homohexamer when secreted. Interacts with envelope protein E. As to quaternary structure, interacts (via N-terminus) with serine protease NS3. In terms of assembly, forms a heterodimer with serine protease NS3. May form homooligomers. Forms a heterodimer with NS2B. Interacts with NS4B. Interacts with unphosphorylated RNA-directed RNA polymerase NS5; this interaction stimulates RNA-directed RNA polymerase NS5 guanylyltransferase activity. Interacts with host SHFL. As to quaternary structure, interacts with host MAVS; this interaction inhibits the synthesis of IFN-beta. Interacts with host SHFL. Interacts with host AUP1; the interaction occurs in the presence of Dengue virus NS4B and induces lipophagy which facilitates production of virus progeny particles. In terms of assembly, interacts with serine protease NS3. Homodimer. Interacts with host STAT2; this interaction inhibits the phosphorylation of the latter, and, when all viral proteins are present (polyprotein), targets STAT2 for degradation. Interacts with serine protease NS3. Interacts with host PAF1 complex; the interaction may prevent the recruitment of the PAF1 complex to interferon-responsive genes, and thus reduces the immune response. Post-translationally, specific enzymatic cleavages in vivo yield mature proteins. Cleavages in the lumen of endoplasmic reticulum are performed by host signal peptidase, whereas cleavages in the cytoplasmic side are performed by serine protease NS3. Signal cleavage at the 2K-4B site requires a prior NS3 protease-mediated cleavage at the 4A-2K site. In terms of processing, cleaved in post-Golgi vesicles by a host furin, releasing the mature small envelope protein M, and peptide pr. This cleavage is incomplete as up to 30% of viral particles still carry uncleaved prM. N-glycosylated. Post-translationally, N-glycosylated. The excreted form is glycosylated and this is required for efficient secretion of the protein from infected cells. In terms of processing, acetylated by host KAT5. Acetylation modulates NS3 RNA-binding and unwinding activities and plays an important positive role for viral replication. Sumoylation of RNA-directed RNA polymerase NS5 increases NS5 protein stability allowing proper viral RNA replication. Post-translationally, phosphorylated on serines residues. This phosphorylation may trigger NS5 nuclear localization.

The protein localises to the virion. It localises to the host nucleus. The protein resides in the host cytoplasm. It is found in the host perinuclear region. Its subcellular location is the secreted. The protein localises to the virion membrane. It localises to the host endoplasmic reticulum membrane. The protein resides in the host mitochondrion. It catalyses the reaction Selective hydrolysis of -Xaa-Xaa-|-Yaa- bonds in which each of the Xaa can be either Arg or Lys and Yaa can be either Ser or Ala.. It carries out the reaction RNA(n) + a ribonucleoside 5'-triphosphate = RNA(n+1) + diphosphate. The enzyme catalyses a ribonucleoside 5'-triphosphate + H2O = a ribonucleoside 5'-diphosphate + phosphate + H(+). The catalysed reaction is ATP + H2O = ADP + phosphate + H(+). It catalyses the reaction a 5'-end (5'-triphosphoguanosine)-ribonucleoside in mRNA + S-adenosyl-L-methionine = a 5'-end (N(7)-methyl 5'-triphosphoguanosine)-ribonucleoside in mRNA + S-adenosyl-L-homocysteine. It carries out the reaction a 5'-end (N(7)-methyl 5'-triphosphoguanosine)-ribonucleoside in mRNA + S-adenosyl-L-methionine = a 5'-end (N(7)-methyl 5'-triphosphoguanosine)-(2'-O-methyl-ribonucleoside) in mRNA + S-adenosyl-L-homocysteine + H(+). Functionally, plays a role in virus budding by binding to the cell membrane and gathering the viral RNA into a nucleocapsid that forms the core of a mature virus particle. During virus entry, may induce genome penetration into the host cytoplasm after hemifusion induced by the surface proteins. Can migrate to the cell nucleus where it modulates host functions. Overcomes the anti-viral effects of host EXOC1 by sequestering and degrading the latter through the proteasome degradation pathway. Regulates the ATPase activity of the NS3 helicase activity. NS4A allows NS3 helicase to conserve energy during unwinding. Plays a role in the inhibition of the host innate immune response. Interacts with host MAVS and thereby prevents the interaction between RIGI and MAVS. In turn, IFN-beta production is impaired. Interacts with host AUP1 which mediates induction of lipophagy in host cells and facilitates production of virus progeny particles. Its function is as follows. Inhibits RNA silencing by interfering with host Dicer. In terms of biological role, prevents premature fusion activity of envelope proteins in trans-Golgi by binding to envelope protein E at pH6.0. After virion release in extracellular space, gets dissociated from E dimers. Functionally, acts as a chaperone for envelope protein E during intracellular virion assembly by masking and inactivating envelope protein E fusion peptide. prM is the only viral peptide matured by host furin in the trans-Golgi network probably to avoid catastrophic activation of the viral fusion activity in acidic Golgi compartment prior to virion release. prM-E cleavage is inefficient, and many virions are only partially matured. These uncleaved prM would play a role in immune evasion. May play a role in virus budding. Exerts cytotoxic effects by activating a mitochondrial apoptotic pathway through M ectodomain. May display a viroporin activity. Its function is as follows. Binds to host cell surface receptor and mediates fusion between viral and cellular membranes. Envelope protein is synthesized in the endoplasmic reticulum in the form of heterodimer with protein prM. They play a role in virion budding in the ER, and the newly formed immature particle is covered with 60 spikes composed of heterodimer between precursor prM and envelope protein E. The virion is transported to the Golgi apparatus where the low pH causes dissociation of PrM-E heterodimers and formation of E homodimers. prM-E cleavage is inefficient, and many virions are only partially matured. These uncleaved prM would play a role in immune evasion. In terms of biological role, involved in immune evasion, pathogenesis and viral replication. Once cleaved off the polyprotein, is targeted to three destinations: the viral replication cycle, the plasma membrane and the extracellular compartment. Essential for viral replication. Required for formation of the replication complex and recruitment of other non-structural proteins to the ER-derived membrane structures. Excreted as a hexameric lipoparticle that plays a role against host immune response. Antagonizing the complement function. Binds to the host macrophages and dendritic cells. Inhibits signal transduction originating from Toll-like receptor 3 (TLR3). Functionally, disrupts the host endothelial glycocalyx layer of host pulmonary microvascular endothelial cells, inducing degradation of sialic acid and shedding of heparan sulfate proteoglycans. NS1 induces expression of sialidases, heparanase, and activates cathepsin L, which activates heparanase via enzymatic cleavage. These effects are probably linked to the endothelial hyperpermeability observed in severe dengue disease. Component of the viral RNA replication complex that functions in virion assembly and antagonizes the host immune response. Its function is as follows. Required cofactor for the serine protease function of NS3. May have membrane-destabilizing activity and form viroporins. In terms of biological role, displays three enzymatic activities: serine protease, NTPase and RNA helicase. NS3 serine protease, in association with NS2B, performs its autocleavage and cleaves the polyprotein at dibasic sites in the cytoplasm: C-prM, NS2A-NS2B, NS2B-NS3, NS3-NS4A, NS4A-2K and NS4B-NS5. NS3 RNA helicase binds RNA and unwinds dsRNA in the 3' to 5' direction. Functionally, functions as a signal peptide for NS4B and is required for the interferon antagonism activity of the latter. Induces the formation of ER-derived membrane vesicles where the viral replication takes place. Inhibits interferon (IFN)-induced host STAT1 phosphorylation and nuclear translocation, thereby preventing the establishment of cellular antiviral state by blocking the IFN-alpha/beta pathway. Its function is as follows. Replicates the viral (+) and (-) RNA genome, and performs the capping of genomes in the cytoplasm. NS5 methylates viral RNA cap at guanine N-7 and ribose 2'-O positions. Besides its role in RNA genome replication, also prevents the establishment of cellular antiviral state by blocking the interferon-alpha/beta (IFN-alpha/beta) signaling pathway. Inhibits host TYK2 and STAT2 phosphorylation, thereby preventing activation of JAK-STAT signaling pathway. May reduce immune responses by preventing the recruitment of the host PAF1 complex to interferon-responsive genes. The chain is Genome polyprotein from Dengue virus type 4 (strain Dominica/814669/1981) (DENV-4).